The following is a 391-amino-acid chain: Multidrug resistance protein MdtL (391 aa).

12 consecutive transmembrane segments (helical) span residues 4-24 (FLICSFALVLLYPAGIDMYLV), 42-62 (IAFSVYLAGMAAAMLFAGKVA), 69-89 (PVAIPGAALFIIASVFCSLAE), 93-113 (LFLAGRFLQGLGAGCCYVVAF), 131-151 (LLNGITCIIPVLAPVLGHLIM), 158-178 (SLFWAMAMMGIAVLMLSLFIL), 203-222 (FFLSRVVITTLSVSVILTFV), 245-265 (ALTAGVSMTVSFSTPFALGIF), 269-289 (TLMITSQVLFLAAGITLAVSP), 293-313 (VSLFGITLICAGFSVGFGVAM), 331-351 (LGIAQVCGSSLWIWLAAVVGI), and 356-376 (MLIGILIACSIVSLLLIMFVA).

It belongs to the major facilitator superfamily. DHA1 family. MdtL (TC 2.A.1.2.22) subfamily.

The protein localises to the cell inner membrane. In terms of biological role, confers resistance to chloramphenicol. The sequence is that of Multidrug resistance protein MdtL from Escherichia coli O9:H4 (strain HS).